The primary structure comprises 147 residues: Ribonuclease H (147 aa).

An RNase H type-1 domain is found at 1–142; the sequence is MAGKVVMYTD…ADELANRGVR (142 aa). The Mg(2+) site is built by Asp10, Glu48, Asp70, and Asp134.

This sequence belongs to the RNase H family. In terms of assembly, monomer. It depends on Mg(2+) as a cofactor.

The protein localises to the cytoplasm. It carries out the reaction Endonucleolytic cleavage to 5'-phosphomonoester.. Endonuclease that specifically degrades the RNA of RNA-DNA hybrids. The polypeptide is Ribonuclease H (Marinobacter nauticus (strain ATCC 700491 / DSM 11845 / VT8) (Marinobacter aquaeolei)).